Reading from the N-terminus, the 172-residue chain is Stellate protein CG33236/CG33240/CG33244/CG33245 (172 aa).

This sequence belongs to the casein kinase 2 subunit beta family. In terms of assembly, interacts in vitro with the casein kinase 2 alpha subunit (CkII-alpha). The relevance of such interaction is however unclear in vivo. In terms of tissue distribution, probably not expressed in wild-type flies. In males lacking the Y chromosome, it is testis-specific and constitutes the main component of star-shaped crystals.

Functionally, unknown. In males lacking the Y chromosome, its strong overexpression leads to the appearance of proteinaceous star-shaped crystals in the primary spermatocytes causing meiotic drive, possibly by interfering with normal casein kinase 2 activity. In Drosophila melanogaster (Fruit fly), this protein is Stellate protein CG33236/CG33240/CG33244/CG33245 (Ste:CG33236).